We begin with the raw amino-acid sequence, 301 residues long: Putative carboxypeptidase slr1534 (301 aa).

The Nucleophile role is filled by S116. Catalysis depends on charge relay system residues E206 and H276.

This sequence belongs to the peptidase S66 family.

This chain is Putative carboxypeptidase slr1534, found in Synechocystis sp. (strain ATCC 27184 / PCC 6803 / Kazusa).